Here is a 410-residue protein sequence, read N- to C-terminus: Tryptophan synthase beta chain (410 aa).

Lys99 is modified (N6-(pyridoxal phosphate)lysine).

The protein belongs to the TrpB family. As to quaternary structure, tetramer of two alpha and two beta chains. Pyridoxal 5'-phosphate serves as cofactor.

The catalysed reaction is (1S,2R)-1-C-(indol-3-yl)glycerol 3-phosphate + L-serine = D-glyceraldehyde 3-phosphate + L-tryptophan + H2O. The protein operates within amino-acid biosynthesis; L-tryptophan biosynthesis; L-tryptophan from chorismate: step 5/5. Its function is as follows. The beta subunit is responsible for the synthesis of L-tryptophan from indole and L-serine. In Pseudomonas fluorescens (strain Pf0-1), this protein is Tryptophan synthase beta chain.